Reading from the N-terminus, the 180-residue chain is Transcription repressor NadR (180 aa).

As to quaternary structure, homodimer.

In terms of biological role, in the presence of nicotinic acid represses transcription of the nadBCA and nifS-nadR operons. Also binds to DNA upstream of the niaP gene, probably regulating it as well. May bind nicotinic acid. The polypeptide is Transcription repressor NadR (nadR) (Bacillus subtilis (strain 168)).